The chain runs to 345 residues: Methylthioribose-1-phosphate isomerase (345 aa).

Residues 44-46 (RGA), Arg86, and Gln194 contribute to the substrate site. The active-site Proton donor is Asp235. A substrate-binding site is contributed by 245-246 (NK).

Belongs to the eIF-2B alpha/beta/delta subunits family. MtnA subfamily.

The catalysed reaction is 5-(methylsulfanyl)-alpha-D-ribose 1-phosphate = 5-(methylsulfanyl)-D-ribulose 1-phosphate. It participates in amino-acid biosynthesis; L-methionine biosynthesis via salvage pathway; L-methionine from S-methyl-5-thio-alpha-D-ribose 1-phosphate: step 1/6. Functionally, catalyzes the interconversion of methylthioribose-1-phosphate (MTR-1-P) into methylthioribulose-1-phosphate (MTRu-1-P). The polypeptide is Methylthioribose-1-phosphate isomerase (Desulfitobacterium hafniense (strain Y51)).